Here is a 539-residue protein sequence, read N- to C-terminus: CTP synthase (539 aa).

An amidoligase domain region spans residues 1 to 269 (MSATKYIFVT…DERVLSKLKL (269 aa)). Residue Ser-15 coordinates CTP. Residue Ser-15 coordinates UTP. 16–21 (SLGKGI) is an ATP binding site. Tyr-56 contributes to the L-glutamine binding site. ATP is bound at residue Asp-73. Mg(2+) is bound by residues Asp-73 and Glu-143. CTP contacts are provided by residues 150–152 (DIE), 190–195 (KTKPTQ), and Lys-226. UTP-binding positions include 190–195 (KTKPTQ) and Lys-226. Positions 295–537 (NIALVGKYVE…VKAANDFAKG (243 aa)) constitute a Glutamine amidotransferase type-1 domain. L-glutamine is bound at residue Gly-357. Cys-384 acts as the Nucleophile; for glutamine hydrolysis in catalysis. L-glutamine-binding positions include 385–388 (LGMQ), Glu-408, and Arg-465. Active-site residues include His-510 and Glu-512.

The protein belongs to the CTP synthase family. In terms of assembly, homotetramer.

It catalyses the reaction UTP + L-glutamine + ATP + H2O = CTP + L-glutamate + ADP + phosphate + 2 H(+). The enzyme catalyses L-glutamine + H2O = L-glutamate + NH4(+). The catalysed reaction is UTP + NH4(+) + ATP = CTP + ADP + phosphate + 2 H(+). It functions in the pathway pyrimidine metabolism; CTP biosynthesis via de novo pathway; CTP from UDP: step 2/2. Allosterically activated by GTP, when glutamine is the substrate; GTP has no effect on the reaction when ammonia is the substrate. The allosteric effector GTP functions by stabilizing the protein conformation that binds the tetrahedral intermediate(s) formed during glutamine hydrolysis. Inhibited by the product CTP, via allosteric rather than competitive inhibition. Functionally, catalyzes the ATP-dependent amination of UTP to CTP with either L-glutamine or ammonia as the source of nitrogen. Regulates intracellular CTP levels through interactions with the four ribonucleotide triphosphates. The protein is CTP synthase of Cytophaga hutchinsonii (strain ATCC 33406 / DSM 1761 / CIP 103989 / NBRC 15051 / NCIMB 9469 / D465).